The following is a 151-amino-acid chain: Sec-independent protein translocase protein TatB (151 aa).

The helical transmembrane segment at 1–21 threads the bilayer; sequence MFGMSLPEIIIIAVIAVIFLG. Residues 120 to 131 are compositionally biased toward low complexity; it reads NNDPLNNETLNE. The tract at residues 120-151 is disordered; that stretch reads NNDPLNNETLNEQPSKPSPNLNLENKEIKKEA. Over residues 132 to 142 the composition is skewed to polar residues; that stretch reads QPSKPSPNLNL.

It belongs to the TatB family. In terms of assembly, the Tat system comprises two distinct complexes: a TatABC complex, containing multiple copies of TatA, TatB and TatC subunits, and a separate TatA complex, containing only TatA subunits. Substrates initially bind to the TatABC complex, which probably triggers association of the separate TatA complex to form the active translocon.

The protein localises to the cell inner membrane. Part of the twin-arginine translocation (Tat) system that transports large folded proteins containing a characteristic twin-arginine motif in their signal peptide across membranes. Together with TatC, TatB is part of a receptor directly interacting with Tat signal peptides. TatB may form an oligomeric binding site that transiently accommodates folded Tat precursor proteins before their translocation. The polypeptide is Sec-independent protein translocase protein TatB (Campylobacter fetus subsp. fetus (strain 82-40)).